Here is a 362-residue protein sequence, read N- to C-terminus: Salactin (362 aa).

Acidic residues predominate over residues 1 to 10; the sequence is MSDDTEDDSG. Positions 1-28 are disordered; the sequence is MSDDTEDDSGGESTADMEFGEQPAPLGV.

As to quaternary structure, forms dynamically unstable filaments. Monomers are added at the growing filament end. In vitro, salactin polymerizes in the presence of ATP and AMP-PNP but not in the presence of ADP, GTP, ATPgammaS or buffer alone.

The protein resides in the cytoplasm. Its function is as follows. Actin homolog which might be involved in partitioning DNA between daughter cells when chromosomal copy number is low. This is Salactin from Halobacterium salinarum (strain ATCC 700922 / JCM 11081 / NRC-1) (Halobacterium halobium).